The sequence spans 203 residues: Small ribosomal subunit protein uS4 (203 aa).

Residues 93 to 153 enclose the S4 RNA-binding domain; it reads QRLDSLVYRL…DKSKNIVPIQ (61 aa).

It belongs to the universal ribosomal protein uS4 family. As to quaternary structure, part of the 30S ribosomal subunit. Contacts protein S5. The interaction surface between S4 and S5 is involved in control of translational fidelity.

In terms of biological role, one of the primary rRNA binding proteins, it binds directly to 16S rRNA where it nucleates assembly of the body of the 30S subunit. Functionally, with S5 and S12 plays an important role in translational accuracy. The chain is Small ribosomal subunit protein uS4 from Leuconostoc citreum (strain KM20).